Consider the following 45-residue polypeptide: Omega-hexatoxin-Hv2a (45 aa).

Disulfide bonds link Cys4-Cys18, Cys11-Cys24, and Cys17-Cys29.

Belongs to the neurotoxin 15 family. 02 (omega-actx) subfamily. Expressed by the venom gland.

It is found in the secreted. In terms of biological role, potent inhibitor of insect (bee brain), but not mammalian (rat trigeminal neurons), voltage-gated calcium channels (Cav). In vivo, injection into lone star ticks (Amblyomma americanum) induces curling of all eight legs into closed loops, followed by death. In Hadronyche versuta (Blue mountains funnel-web spider), this protein is Omega-hexatoxin-Hv2a.